Reading from the N-terminus, the 562-residue chain is uncharacterized protein (562 aa).

This is an uncharacterized protein from Escherichia coli (strain K12).